Here is a 481-residue protein sequence, read N- to C-terminus: MAESYDVIIIGSGPGGYVAAIRASQLGLKTAIVEREHMGGICLNWGCIPTKALLRSAEVLDHANHFKDFGLVLEGSVKPDAKAVVGRSRAVSARLNAGVGFLMKKNKIDIIWGEAKLTKPGEIVVGKSSKPVVEPQHPLPKNVKGEGTYTAKHIIIATGARPRALPGIEPDGKLIWTYFEALKPDALPKSLIVMGSGAIGIEFASFYRSMGVDVTVVEVMPTIMPVEDAEITAIARKQLEKRGLKIFTSAKVTKVEKGAGSITAHVETSDGKVQQITADRMISAVGVQGNIENLGLEALGVKTDRGCVVADGYGKTNVAGIYAIGDVAGPPMLAHKAEHEGVVCVEKIAGLPNVHPTDKGKVPGCTYCNPQVASVGLTEAKAKELGRDIRVGRFSFAANGKAIALGEDQGMVKVIFDKKTGELLGAHMVGAEVTELIQGFVVAMNLETTEEELMHTIFPHPTVSETMKEAVLDAYGRVLNA.

Residues glutamate 34–cysteine 42 and lysine 51 contribute to the FAD site. Cysteines 42 and 47 form a disulfide. NAD(+)-binding positions include glycine 195 to isoleucine 199, glutamate 218, and alanine 284 to valine 287. Positions 326 and 334 each coordinate FAD. Residue histidine 460 is the Proton acceptor of the active site.

This sequence belongs to the class-I pyridine nucleotide-disulfide oxidoreductase family. As to quaternary structure, homodimer. FAD is required as a cofactor.

The protein localises to the cytoplasm. It carries out the reaction N(6)-[(R)-dihydrolipoyl]-L-lysyl-[protein] + NAD(+) = N(6)-[(R)-lipoyl]-L-lysyl-[protein] + NADH + H(+). In terms of biological role, lipoamide dehydrogenase is a component of the alpha-ketoacid dehydrogenase complexes. The polypeptide is Dihydrolipoyl dehydrogenase (lpdA) (Rhizobium etli (strain ATCC 51251 / DSM 11541 / JCM 21823 / NBRC 15573 / CFN 42)).